A 484-amino-acid chain; its full sequence is Carbohydrate sulfotransferase 7 (484 aa).

The Cytoplasmic segment spans residues 1-12 (MKGRRRRRREYC). A helical; Signal-anchor for type II membrane protein membrane pass occupies residues 13-33 (KFTLLLALYTLLLLLVPSVLD). The Lumenal segment spans residues 34-484 (SHSEQDKGRN…PLETKANWAV (451 aa)). Positions 71–90 (RSLAEGNPDRSPGSPGNLSA) are disordered. Residue N87 is glycosylated (N-linked (GlcNAc...) asparagine). 3'-phosphoadenylyl sulfate is bound at residue 108–114 (WRTGSSF). N184 carries N-linked (GlcNAc...) asparagine glycosylation. A 3'-phosphoadenylyl sulfate-binding site is contributed by 276 to 284 (RDPRAVHNS). N405 carries N-linked (GlcNAc...) asparagine glycosylation. The residue at position 460 (S460) is a Phosphoserine. Positions 460 to 473 (SGDERDRKTVREGE) are enriched in basic and acidic residues. Residues 460–484 (SGDERDRKTVREGETPLETKANWAV) form a disordered region.

It belongs to the sulfotransferase 1 family. Gal/GlcNAc/GalNAc subfamily. Widely expressed. Highly expressed in kidney. Expressed at lower level in heart, lung and liver.

It is found in the golgi apparatus membrane. It catalyses the reaction chondroitin beta-D-glucuronate + n 3'-phosphoadenylyl sulfate = chondroitin 6'-sulfate + n adenosine 3',5'-bisphosphate + n H(+). Its function is as follows. Sulfotransferase that utilizes 3'-phospho-5'-adenylyl sulfate (PAPS) as sulfonate donor to catalyze the transfer of sulfate to position 6 of non-reducing N-acetylglucosamine (GlcNAc) residues. Preferentially acts on mannose-linked GlcNAc. Also able to catalyze the transfer of sulfate to position 6 of the N-acetylgalactosamine (GalNAc) residue of chondroitin. Also acts on core 2 mucin-type oligosaccharide and N-acetyllactosamine oligomer with a lower efficiency. Has weak or no activity toward keratan sulfate and oligosaccharides containing the Galbeta1-4GlcNAc. Catalyzes 6-O-sulfation of beta-benzyl GlcNAc but not alpha- or beta-benzyl GalNAc. In Mus musculus (Mouse), this protein is Carbohydrate sulfotransferase 7 (Chst7).